We begin with the raw amino-acid sequence, 119 residues long: UPF0212 protein Mlab_0931 (119 aa).

Belongs to the UPF0212 family.

The polypeptide is UPF0212 protein Mlab_0931 (Methanocorpusculum labreanum (strain ATCC 43576 / DSM 4855 / Z)).